The chain runs to 274 residues: Large ribosomal subunit protein uL2 (274 aa).

The interval 195–274 (VGNSDHGLER…SKYIIERRKK (80 aa)) is disordered. 2 stretches are compositionally biased toward basic residues: residues 207 to 220 (KAGR…RPRN) and 244 to 264 (PRSR…KKQS).

It belongs to the universal ribosomal protein uL2 family. In terms of assembly, part of the 50S ribosomal subunit. Forms a bridge to the 30S subunit in the 70S ribosome.

Its function is as follows. One of the primary rRNA binding proteins. Required for association of the 30S and 50S subunits to form the 70S ribosome, for tRNA binding and peptide bond formation. It has been suggested to have peptidyltransferase activity; this is somewhat controversial. Makes several contacts with the 16S rRNA in the 70S ribosome. This Bacteroides thetaiotaomicron (strain ATCC 29148 / DSM 2079 / JCM 5827 / CCUG 10774 / NCTC 10582 / VPI-5482 / E50) protein is Large ribosomal subunit protein uL2.